We begin with the raw amino-acid sequence, 822 residues long: MASASAAAETLAAASLPVASPSRSLLRPLPRRASAGGGCSASVRISAVPPRGLGFAVVQRRVLRRPPAARANVEREGDGAEASGPGEASSSSSGDGDRDGAAAAAEAGGDGASTSTTSAAATPPQPPSSKRGENKWRRKLIKGGGVGRWLWEPIVQGREMGFLLLQLGFAIFALRMLRPEIALPGSEPRPQTTYVSVPYSDFLASIDKNQVKKVEVDGVHIMFRLRPEVEARAMEQPQVQRGTDSVADNAGVPRRIVFTTTRPVDIKTPYEKMVENSVEFGSPDKRSGGLLNSALVALIYVVLIAVVLQRLPISFSQHSAGQLRNRKNSNSGGAKVSESTDIVTFADVAGVDEAKEELEEIVEFLRNPERYIRLGARPPRGVLLVGLPGTGKTLLAKAVAGEAEVPFISCSASEFVELYVGMGAARVRDLFARAKKESPSIIFIDEIDAVAKSRDGRYRIVSNDEREQTLNQLLTEMDGFDTNSAVIVLGATNRADVLDPALRRPGRFDRVVMVEAPDRFGRESILKVHVSRKELPLGKDVDLSDIAAMTTGFTGADLANLVNEAALLAGRSNKEIVEKIDFICAVERSIAGIEKKHAKLKGNEKAVVARHEVGHAVVGTAVANLLPGQPRVEKLSILPRSGGALGFTYTPPTTEDRYLLFVDELRGRLVTLLGGRAAEEVVLSGRVSTGALDDIRRATDMAYKAVAEYGLNQRIGPISVATLSNGGLDESGGSPWGRDQGHLVDLVQREVKALLQSALDVALSVVRANPTVLEGLGAYLEENEKVEGEELQEWLKSVVAPKELTSFIRGKQEQVLQLEAGS.

Composition is skewed to low complexity over residues 1–34, 80–94, and 101–122; these read MASA…RRAS, AEAS…SSSG, and AAAA…AAAT. Disordered stretches follow at residues 1-44 and 67-136; these read MASA…ASVR and PAAR…ENKW. A chloroplast-targeting transit peptide spans 1–70; that stretch reads MASASAAAET…RVLRRPPAAR (70 aa). Transmembrane regions (helical) follow at residues 154 to 174 and 288 to 308; these read IVQG…IFAL and GGLL…AVVL. 386–393 contacts ATP; it reads GLPGTGKT. A Zn(2+)-binding site is contributed by histidine 611. Glutamate 612 is a catalytic residue. Zn(2+)-binding residues include histidine 615 and aspartate 694.

It in the N-terminal section; belongs to the AAA ATPase family. This sequence in the C-terminal section; belongs to the peptidase M41 family. Requires Zn(2+) as cofactor.

Its subcellular location is the plastid. The protein resides in the chloroplast thylakoid membrane. Functionally, probable ATP-dependent zinc metallopeptidase. The protein is ATP-dependent zinc metalloprotease FTSH 7, chloroplastic (FTSH7) of Oryza sativa subsp. japonica (Rice).